Here is a 467-residue protein sequence, read N- to C-terminus: tRNA-2-methylthio-N(6)-dimethylallyladenosine synthase (467 aa).

An MTTase N-terminal domain is found at 5-125 (RKLHIKSYGC…LPQLLAQASR (121 aa)). [4Fe-4S] cluster contacts are provided by C14, C50, C88, C166, C170, and C173. In terms of domain architecture, Radical SAM core spans 152-384 (RARGVSAFVT…QSLIDSQQAA (233 aa)). The region spanning 387–449 (KAAIGSVVDV…RYSLLGELVA (63 aa)) is the TRAM domain.

This sequence belongs to the methylthiotransferase family. MiaB subfamily. Monomer. The cofactor is [4Fe-4S] cluster.

The protein localises to the cytoplasm. The enzyme catalyses N(6)-dimethylallyladenosine(37) in tRNA + (sulfur carrier)-SH + AH2 + 2 S-adenosyl-L-methionine = 2-methylsulfanyl-N(6)-dimethylallyladenosine(37) in tRNA + (sulfur carrier)-H + 5'-deoxyadenosine + L-methionine + A + S-adenosyl-L-homocysteine + 2 H(+). In terms of biological role, catalyzes the methylthiolation of N6-(dimethylallyl)adenosine (i(6)A), leading to the formation of 2-methylthio-N6-(dimethylallyl)adenosine (ms(2)i(6)A) at position 37 in tRNAs that read codons beginning with uridine. The polypeptide is tRNA-2-methylthio-N(6)-dimethylallyladenosine synthase (Bradyrhizobium sp. (strain ORS 278)).